The following is a 520-amino-acid chain: Hydroxymethylglutaryl-CoA synthase, cytoplasmic (520 aa).

The residue at position 4 (Ser4) is a Phosphoserine. (3S)-3-hydroxy-3-methylglutaryl-CoA contacts are provided by Asp43 and Ala44. 44–46 (AGK) serves as a coordination point for CoA. The residue at position 46 (Lys46) is an N6-acetyllysine. Glu95 acts as the Proton donor/acceptor in catalysis. Positions 129, 167, 171, 221, and 264 each coordinate (3S)-3-hydroxy-3-methylglutaryl-CoA. Cys129 acts as the Acyl-thioester intermediate in catalysis. Residue Asn167 coordinates CoA. Ser221 is a binding site for CoA. The active-site Proton donor/acceptor is the His264. Residues Lys269 and Lys273 each coordinate CoA. 3 residues coordinate (3S)-3-hydroxy-3-methylglutaryl-CoA: Lys273, Asn343, and Ser377. N6-acetyllysine is present on Lys273. Positions 487–520 (NTATEHIPSPAKKVPRLPATSGEPESAVISNGEH) are disordered. 2 positions are modified to phosphoserine: Ser495 and Ser516.

Belongs to the thiolase-like superfamily. HMG-CoA synthase family. As to quaternary structure, homodimer.

Its subcellular location is the cytoplasm. The catalysed reaction is acetoacetyl-CoA + acetyl-CoA + H2O = (3S)-3-hydroxy-3-methylglutaryl-CoA + CoA + H(+). It participates in metabolic intermediate biosynthesis; (R)-mevalonate biosynthesis; (R)-mevalonate from acetyl-CoA: step 2/3. Catalyzes the condensation of acetyl-CoA with acetoacetyl-CoA to form HMG-CoA, which is converted by HMG-CoA reductase (HMGCR) into mevalonate, a precursor for cholesterol synthesis. This Rattus norvegicus (Rat) protein is Hydroxymethylglutaryl-CoA synthase, cytoplasmic.